A 427-amino-acid chain; its full sequence is Riboflavin transporter rft-1 (427 aa).

Residues 1–2 lie on the Cytoplasmic side of the membrane; that stretch reads MK. The chain crosses the membrane as a helical span at residues 3–23; sequence TFLFTFCLVAIFGSSSWIGTN. The Extracellular segment spans residues 24–42; the sequence is SVWMELSLLTAKLPEGWNL. The helical transmembrane segment at 43 to 63 threads the bilayer; it reads PSYLSAIVQIACLGPLIYSII. The Cytoplasmic segment spans residues 64–73; it reads HKGIKMTIPT. A helical transmembrane segment spans residues 74–94; it reads VPLIFIFMVLACICQLGLCFF. At 95–111 the chain is on the extracellular side; it reads WDDTGYIFGAIRSWPLY. Residues 112 to 132 traverse the membrane as a helical segment; it reads LLLFGLAIVDAISSVLFLPFM. Over 133-139 the chain is Cytoplasmic; it reads AQFHPSF. A helical transmembrane segment spans residues 140-160; that stretch reads LNAYFVGMGLSALIPSLLSLI. Residues 161–184 lie on the Extracellular side of the membrane; sequence QGTSNYWCDDNKTPHYYPPRFSVS. Residues 185-205 traverse the membrane as a helical segment; that stretch reads MFFLINFFFTCAAVAAFLVLY. Over 206–261 the chain is Cytoplasmic; sequence KIGAHKNSSQVEPEPKHSIQIIQGDSTTDVNEVNTESSFQETSSIPDSSSATGARL. Residues 262–282 form a helical membrane-spanning segment; sequence AFLLLTTALVNAQMNGIVTSV. At 283–297 the chain is on the extracellular side; the sequence is QSYATLVYSQNTYHY. The chain crosses the membrane as a helical span at residues 298–318; that stretch reads AVTLSNVISPLASYLQFFVKI. At 319–322 the chain is on the cytoplasmic side; sequence RSLP. The helical transmembrane segment at 323–343 threads the bilayer; the sequence is ILAFLTLCSSLTTAVIIYLAA. Topologically, residues 344-353 are extracellular; the sequence is LSPNWIFNSE. A helical transmembrane segment spans residues 354-374; it reads TAGTIISIASSLIAAGLHSYL. The Cytoplasmic portion of the chain corresponds to 375–391; the sequence is RVMFAALLREGNQKESR. Residues 392 to 412 form a helical membrane-spanning segment; the sequence is LFWCGAFIQIGSFTGSAIMFP. At 413–427 the chain is on the extracellular side; it reads LVNVWKLFHSAPSCR.

This sequence belongs to the riboflavin transporter family. As to expression, expressed in intestine.

The protein localises to the cell membrane. The catalysed reaction is riboflavin(in) = riboflavin(out). Activity is strongly inhibited by riboflavin analogs, such as lumiflavin and lumichrome. In terms of biological role, riboflavin transporter. Riboflavin transport is Na(+)-independent but pH-sensitive. The chain is Riboflavin transporter rft-1 from Caenorhabditis elegans.